We begin with the raw amino-acid sequence, 278 residues long: HTH-type transcriptional activator RhaS (278 aa).

Positions 174–272 (NLLLAWLEDH…NWSPRDIRQG (99 aa)) constitute an HTH araC/xylS-type domain. 2 consecutive DNA-binding regions (H-T-H motif) follow at residues 191–212 (DAVADQFSLSLRTLHRQLKQQT) and 239–262 (VTDIAYHCGFSDSNHFSTLFRREF).

As to quaternary structure, binds DNA as a dimer.

It is found in the cytoplasm. Functionally, activates expression of the rhaBAD and rhaT operons. In Escherichia coli O157:H7, this protein is HTH-type transcriptional activator RhaS.